Consider the following 155-residue polypeptide: Ribosomal RNA large subunit methyltransferase H (155 aa).

S-adenosyl-L-methionine-binding positions include Leu72, Gly103, and 122 to 127 (LSDLTL).

Belongs to the RNA methyltransferase RlmH family. As to quaternary structure, homodimer.

Its subcellular location is the cytoplasm. It catalyses the reaction pseudouridine(1915) in 23S rRNA + S-adenosyl-L-methionine = N(3)-methylpseudouridine(1915) in 23S rRNA + S-adenosyl-L-homocysteine + H(+). In terms of biological role, specifically methylates the pseudouridine at position 1915 (m3Psi1915) in 23S rRNA. This chain is Ribosomal RNA large subunit methyltransferase H, found in Polaromonas naphthalenivorans (strain CJ2).